We begin with the raw amino-acid sequence, 184 residues long: Photosystem I assembly protein Ycf4 (184 aa).

The next 2 helical transmembrane spans lie at 19–39 and 57–77; these read ISNFCWAFILFLGSLGFLLVG and IIFFPQGIVMSFYGIAGLFIS.

It belongs to the Ycf4 family.

The protein resides in the plastid. Its subcellular location is the chloroplast thylakoid membrane. Seems to be required for the assembly of the photosystem I complex. This chain is Photosystem I assembly protein Ycf4, found in Cucumis sativus (Cucumber).